We begin with the raw amino-acid sequence, 188 residues long: Protein GrpE 2 (188 aa).

Positions 1–29 (MDNQEKKTNYQNTDKENDLEKNKEKKNDE) are enriched in basic and acidic residues. A disordered region spans residues 1–33 (MDNQEKKTNYQNTDKENDLEKNKEKKNDESIFQ).

This sequence belongs to the GrpE family. In terms of assembly, homodimer.

It localises to the cytoplasm. In terms of biological role, participates actively in the response to hyperosmotic and heat shock by preventing the aggregation of stress-denatured proteins, in association with DnaK and GrpE. It is the nucleotide exchange factor for DnaK and may function as a thermosensor. Unfolded proteins bind initially to DnaJ; upon interaction with the DnaJ-bound protein, DnaK hydrolyzes its bound ATP, resulting in the formation of a stable complex. GrpE releases ADP from DnaK; ATP binding to DnaK triggers the release of the substrate protein, thus completing the reaction cycle. Several rounds of ATP-dependent interactions between DnaJ, DnaK and GrpE are required for fully efficient folding. The polypeptide is Protein GrpE 2 (Buchnera aphidicola subsp. Schizaphis graminum (strain Sg)).